A 549-amino-acid polypeptide reads, in one-letter code: YTH domain-containing family protein 1 (549 aa).

Disordered stretches follow at residues 29 to 102 (QAPW…QPNM), 139 to 165 (GHPP…RQSG), 243 to 262 (GASG…QQAV), 273 to 298 (DSTE…AKGP), and 425 to 458 (REDS…SENK). Over residues 49–61 (VVGQTQSSPQYNG) the composition is skewed to polar residues. Over residues 71 to 102 (QGYYMPQQQQQQQQMPQYYGGPMSPSQPQPNM) the composition is skewed to low complexity. Composition is skewed to polar residues over residues 251-260 (TGPSATTPQQ) and 273-289 (DSTE…TPTA). Residues 307–513 (DRFFVLKSLT…SVGRRLIGLF (207 aa)) form the YTH domain.

It belongs to the YTHDF family. YTHDF1 subfamily.

Its function is as follows. Specifically recognizes and binds N6-methyladenosine (m6A)-containing mRNAs, and regulates their stability. M6A is a modification present at internal sites of mRNAs and some non-coding RNAs and plays a role in mRNA stability and processing. Directly interacts with the acid phosphatase APHA mRNA to increase its stability. This Cryphonectria parasitica (strain ATCC 38755 / EP155) protein is YTH domain-containing family protein 1.